The chain runs to 110 residues: Snake venom vascular endothelial growth factor toxin ICPP (110 aa).

Position 1 is a pyrrolidone carboxylic acid (Gln1). 3 cysteine pairs are disulfide-bonded: Cys14–Cys56, Cys45–Cys91, and Cys49–Cys93.

In terms of assembly, homodimer; disulfide-linked. Interacts with high affinity with KDR/VEGFR-2, and with a lower affinity with neuropilin-1 (NRP1) and neuropilin-2 (NRP2). As to expression, expressed by the venom gland.

The protein resides in the secreted. Functionally, snake venom VEGFs may contribute to venom dispersion and prey subjugation by inducing vascular permeability and hypotension. This protein increases vascular permeability and angiogenesis probably through VEGF receptor (KDR/VEGFR-2) signaling. Induces DNA synthesis in human umbilical vein endothelial cells, and promotes mouse embryonic stem cell proliferation and differentiation. It may also induce a drastic hypotensive effect after intravenous injection. The hypotension is mediated by nitric oxide (NO), which is produced by VEGF-activated endothelium NO synthase. The chain is Snake venom vascular endothelial growth factor toxin ICPP from Macrovipera lebetinus (Levantine viper).